A 259-amino-acid chain; its full sequence is 5'-nucleotidase SurE (259 aa).

A divalent metal cation is bound by residues Asp-8, Asp-9, Ser-40, and Asn-92.

It belongs to the SurE nucleotidase family. Requires a divalent metal cation as cofactor.

Its subcellular location is the cytoplasm. The catalysed reaction is a ribonucleoside 5'-phosphate + H2O = a ribonucleoside + phosphate. Functionally, nucleotidase that shows phosphatase activity on nucleoside 5'-monophosphates. The polypeptide is 5'-nucleotidase SurE (Xanthomonas campestris pv. campestris (strain B100)).